The following is a 228-amino-acid chain: Cytidylate kinase (228 aa).

Position 17-25 (17-25 (GPTASGKGT)) interacts with ATP.

This sequence belongs to the cytidylate kinase family. Type 1 subfamily.

The protein resides in the cytoplasm. The catalysed reaction is CMP + ATP = CDP + ADP. The enzyme catalyses dCMP + ATP = dCDP + ADP. The polypeptide is Cytidylate kinase (Burkholderia thailandensis (strain ATCC 700388 / DSM 13276 / CCUG 48851 / CIP 106301 / E264)).